The primary structure comprises 197 residues: Dephospho-CoA kinase (197 aa).

One can recognise a DPCK domain in the interval 2-197 (IIGLTGGIAS…GAIKDLANLV (196 aa)). 10–15 (ASGKST) lines the ATP pocket.

It belongs to the CoaE family.

The protein localises to the cytoplasm. The catalysed reaction is 3'-dephospho-CoA + ATP = ADP + CoA + H(+). It functions in the pathway cofactor biosynthesis; coenzyme A biosynthesis; CoA from (R)-pantothenate: step 5/5. Catalyzes the phosphorylation of the 3'-hydroxyl group of dephosphocoenzyme A to form coenzyme A. This chain is Dephospho-CoA kinase, found in Streptococcus thermophilus (strain ATCC BAA-250 / LMG 18311).